Reading from the N-terminus, the 358-residue chain is Trace amine-associated receptor 7a (358 aa).

The Extracellular portion of the chain corresponds to 1-47 (MDKLVDNFLSGQSRTMSEDLLSASSPQLCYENLNGSCIRSPYSPGPR). Asparagine 34 is a glycosylation site (N-linked (GlcNAc...) asparagine). Intrachain disulfides connect cysteine 37–cysteine 201 and cysteine 120–cysteine 205. Residues 48-68 (LILYAVFGFGAVLAVCGNLLV) form a helical membrane-spanning segment. Residues 69 to 83 (MTSILHFRQLHSPAN) lie on the Cytoplasmic side of the membrane. Residues 84 to 104 (FLVASLACADFLVGLTVMPFS) traverse the membrane as a helical segment. The Extracellular segment spans residues 105 to 121 (TVRSVEGCWYFGDTYCK). Residues 122-143 (FHSCFEGSFCYSSIFHLCFISV) form a helical membrane-spanning segment. Residues 144–166 (DRYIAVSDPLIYPTRFTASVSGK) are Cytoplasmic-facing. Residues 167–187 (CITFSWLLSIIYSFSLLYTGA) traverse the membrane as a helical segment. Residues 188–212 (NEAGLEDLVSALTCVGGCQIAVNQS) are Extracellular-facing. N-linked (GlcNAc...) asparagine glycosylation is present at asparagine 210. A helical membrane pass occupies residues 213–233 (WVFINFLLFLVPTLVMMTVYS). Residues 234-274 (KIFLIAKQQAQNIEKMSKQTTRASESYKDRVAKRERKAAKT) are Cytoplasmic-facing. Residues 275–295 (LGIAVAAFLLSWLPYFIDSII) form a helical membrane-spanning segment. Topologically, residues 296-309 (DAFLGFITPTYVYE) are extracellular. Residues 310–333 (ILVWIAYYNSAMNPLIYAFFYPWF) traverse the membrane as a helical segment. Residues 334–358 (RKAIKLIVTGKILRQNSSVTNLFPE) lie on the Cytoplasmic side of the membrane.

The protein belongs to the G-protein coupled receptor 1 family.

The protein resides in the cell membrane. Olfactory receptor specific for N,N-dimethylalkylamines trace amines. Trace amine compounds are enriched in animal body fluids and act on trace amine-associated receptors (TAARs) to elicit both intraspecific and interspecific innate behaviors. Ligand-binding causes a conformation change that triggers signaling via G(s)-class of G alpha proteins (GNAL or GNAS). In Rattus norvegicus (Rat), this protein is Trace amine-associated receptor 7a.